A 250-amino-acid polypeptide reads, in one-letter code: Small ribosomal subunit protein uS2 (250 aa).

This sequence belongs to the universal ribosomal protein uS2 family.

This Paraburkholderia phytofirmans (strain DSM 17436 / LMG 22146 / PsJN) (Burkholderia phytofirmans) protein is Small ribosomal subunit protein uS2.